Reading from the N-terminus, the 115-residue chain is Con-Ins G1c (115 aa).

The N-terminal stretch at 1–24 (MTTSFYFLLMALGLLLYVCQSSFG) is a signal peptide. Positions 25–29 (NQHTR) are excised as a propeptide. 4-hydroxyproline; partial is present on proline 34. 3 disulfides stabilise this stretch: cysteine 38/cysteine 101, cysteine 50/cysteine 114, and cysteine 100/cysteine 105. Glutamate 41 bears the 4-carboxyglutamate mark. Positions 53-94 (KRNDAGKKRGRASPLWQRRGSLSQLKARAKRNGAFHLPRDGR) are cleaved as a propeptide — c peptide. Glutamate 98 is modified (4-carboxyglutamate). Residue proline 104 is modified to 4-hydroxyproline; partial. Glutamate 109 is subject to 4-carboxyglutamate; partial.

The protein belongs to the insulin family. Heterodimer of A and B chains; disulfide-linked. In terms of processing, is different from Con-Ins G1a (AC A0A0B5AC95) due to absence of amidation at Cys-114. In terms of tissue distribution, expressed by the venom gland.

The protein localises to the secreted. Its function is as follows. This venom insulin, from a fish-hunting cone snail, facilitates prey capture by rapidly inducing hypoglycemic shock. It is one of the smallest known insulin found in nature and lacks the C-terminal segment of the B chain that, in human insulin, mediates engagement of the insulin receptor (INSR) and assembly of the hormone's hexameric storage form. Despite lacking this segment, it both binds and activates human insulin receptor (long isoform (HIR-B)) with only a 10-fold lower potency. In vivo, intraperitoneal injection of this peptide into zebrafish lowers blood glucose with the same potency than human insulin. In addition, when applied to water, this peptide reduces overall locomotor activity of zebrafish larvae, observed as a significant decrease in the percentage of time spent swimming and movement frequency. In Conus geographus (Geography cone), this protein is Con-Ins G1c.